Consider the following 302-residue polypeptide: Phospho-N-acetylmuramoyl-pentapeptide-transferase (302 aa).

Transmembrane regions (helical) follow at residues 1–21 (MIAANFLLNLFLYPILIKLFR), 42–62 (GTPTMGGILFVLTGFLFGMIS), 67–87 (MVLLGMFLFFLIGFLDDFLSV), 95–115 (LKTYQKALLQTLAAFIMLLLI), 123–143 (FFGSTIEMGKWYYLFALLVIV), 154–174 (GLDGLAGWIYVSGSIPYWFFL), 178–198 (GVSEDILLILGVGVLAFLVFN), 204–224 (IFMGDTGSITLGGVLGTVSVL), 229–249 (FYLVLFFMIPVIETLSVILQV), and 279–299 (IVAVFTVFNLISSLVALEIFG).

It belongs to the glycosyltransferase 4 family. MraY subfamily. The cofactor is Mg(2+).

It is found in the cell inner membrane. The enzyme catalyses UDP-N-acetyl-alpha-D-muramoyl-L-alanyl-gamma-D-glutamyl-meso-2,6-diaminopimeloyl-D-alanyl-D-alanine + di-trans,octa-cis-undecaprenyl phosphate = di-trans,octa-cis-undecaprenyl diphospho-N-acetyl-alpha-D-muramoyl-L-alanyl-D-glutamyl-meso-2,6-diaminopimeloyl-D-alanyl-D-alanine + UMP. Its pathway is cell wall biogenesis; peptidoglycan biosynthesis. In terms of biological role, catalyzes the initial step of the lipid cycle reactions in the biosynthesis of the cell wall peptidoglycan: transfers peptidoglycan precursor phospho-MurNAc-pentapeptide from UDP-MurNAc-pentapeptide onto the lipid carrier undecaprenyl phosphate, yielding undecaprenyl-pyrophosphoryl-MurNAc-pentapeptide, known as lipid I. This Thermotoga maritima (strain ATCC 43589 / DSM 3109 / JCM 10099 / NBRC 100826 / MSB8) protein is Phospho-N-acetylmuramoyl-pentapeptide-transferase.